We begin with the raw amino-acid sequence, 405 residues long: Arginine deiminase (405 aa).

Cys395 serves as the catalytic Amidino-cysteine intermediate.

It belongs to the arginine deiminase family.

It is found in the cytoplasm. The enzyme catalyses L-arginine + H2O = L-citrulline + NH4(+). The protein operates within amino-acid degradation; L-arginine degradation via ADI pathway; carbamoyl phosphate from L-arginine: step 1/2. The chain is Arginine deiminase from Rhodococcus jostii (strain RHA1).